Reading from the N-terminus, the 552-residue chain is Hydroxylamine reductase (552 aa).

Residues cysteine 3, cysteine 6, cysteine 15, and cysteine 21 each contribute to the [4Fe-4S] cluster site. Histidine 247, glutamate 271, cysteine 315, cysteine 407, cysteine 435, cysteine 460, glutamate 495, and lysine 497 together coordinate hybrid [4Fe-2O-2S] cluster. Cysteine 407 carries the post-translational modification Cysteine persulfide.

The protein belongs to the HCP family. Requires [4Fe-4S] cluster as cofactor. The cofactor is hybrid [4Fe-2O-2S] cluster.

The protein localises to the cytoplasm. It catalyses the reaction A + NH4(+) + H2O = hydroxylamine + AH2 + H(+). Catalyzes the reduction of hydroxylamine to form NH(3) and H(2)O. This chain is Hydroxylamine reductase, found in Thermosipho melanesiensis (strain DSM 12029 / CIP 104789 / BI429).